A 151-amino-acid chain; its full sequence is Large ribosomal subunit protein bL9 (151 aa).

Belongs to the bacterial ribosomal protein bL9 family.

Binds to the 23S rRNA. The sequence is that of Large ribosomal subunit protein bL9 from Bordetella petrii (strain ATCC BAA-461 / DSM 12804 / CCUG 43448).